The primary structure comprises 365 residues: tRNA-specific 2-thiouridylase MnmA (365 aa).

Residues 6-13 and Leu32 contribute to the ATP site; that span reads AMSGGVDS. Cys101 serves as the catalytic Nucleophile. The cysteines at positions 101 and 199 are disulfide-linked. Residue Gly125 coordinates ATP. The interaction with tRNA stretch occupies residues 149-151; that stretch reads KDQ. Cys199 functions as the Cysteine persulfide intermediate in the catalytic mechanism.

This sequence belongs to the MnmA/TRMU family.

It localises to the cytoplasm. The catalysed reaction is S-sulfanyl-L-cysteinyl-[protein] + uridine(34) in tRNA + AH2 + ATP = 2-thiouridine(34) in tRNA + L-cysteinyl-[protein] + A + AMP + diphosphate + H(+). Its function is as follows. Catalyzes the 2-thiolation of uridine at the wobble position (U34) of tRNA, leading to the formation of s(2)U34. The polypeptide is tRNA-specific 2-thiouridylase MnmA (Corynebacterium glutamicum (strain R)).